Consider the following 194-residue polypeptide: Putative manganese efflux pump MntP (194 aa).

6 helical membrane-spanning segments follow: residues 3–23 (PITI…AAIG), 37–57 (LYVA…GWLL), 65–85 (IAAF…IHMI), 112–132 (LAAT…SLAF), 137–157 (IGIV…FGVM), and 170–190 (AEIV…YEHL).

Belongs to the MntP (TC 9.B.29) family.

The protein localises to the cell inner membrane. Its function is as follows. Probably functions as a manganese efflux pump. The chain is Putative manganese efflux pump MntP from Xylella fastidiosa (strain M12).